Here is a 120-residue protein sequence, read N- to C-terminus: Small ribosomal subunit protein eS24 (120 aa).

A disordered region spans residues Arg101–Gly120.

Belongs to the eukaryotic ribosomal protein eS24 family.

The sequence is that of Small ribosomal subunit protein eS24 from Saccharolobus islandicus (strain Y.N.15.51 / Yellowstone #2) (Sulfolobus islandicus).